The following is a 95-amino-acid chain: Small ribosomal subunit protein bS6 (95 aa).

It belongs to the bacterial ribosomal protein bS6 family.

In terms of biological role, binds together with bS18 to 16S ribosomal RNA. This is Small ribosomal subunit protein bS6 from Onion yellows phytoplasma (strain OY-M).